Reading from the N-terminus, the 34-residue chain is Non-toxic venom protein (34 aa).

The region spanning 1-34 (KEGYPTNSEGCKITXLFNDPYCKGXCINLSTQAD) is the LCN-type CS-alpha/beta domain.

In terms of tissue distribution, expressed by the venom gland.

The protein resides in the secreted. Does not cause symptoms of intoxication, paralysis or death in insects (A.domestica). This chain is Non-toxic venom protein, found in Rhopalurus junceus (Caribbean blue scorpion).